Reading from the N-terminus, the 188-residue chain is Segregation and condensation protein B (188 aa).

It belongs to the ScpB family. In terms of assembly, homodimer. Homodimerization may be required to stabilize the binding of ScpA to the Smc head domains. Component of a cohesin-like complex composed of ScpA, ScpB and the Smc homodimer, in which ScpA and ScpB bind to the head domain of Smc. The presence of the three proteins is required for the association of the complex with DNA.

The protein localises to the cytoplasm. Its function is as follows. Participates in chromosomal partition during cell division. May act via the formation of a condensin-like complex containing Smc and ScpA that pull DNA away from mid-cell into both cell halves. The chain is Segregation and condensation protein B from Lactococcus lactis subsp. lactis (strain IL1403) (Streptococcus lactis).